Reading from the N-terminus, the 97-residue chain is Conotoxin Cal6.1b (97 aa).

An N-terminal signal peptide occupies residues 1 to 22; sequence MKLTTVLVVALLVLAACQFTVT. The segment at 22–46 is disordered; the sequence is TDNSGDDPENPSLRSAGENQNPDST. The propeptide occupies 23–68; it reads DNSGDDPENPSLRSAGENQNPDSTKTITAWATRDMTNMRRGLNRPS. Cystine bridges form between C71/C87, C78/C91, and C86/C96.

Belongs to the conotoxin O1 superfamily. Expressed by the venom duct.

Its subcellular location is the secreted. In terms of biological role, probable neurotoxin with unknown target. Possibly targets ion channels. This Californiconus californicus (California cone) protein is Conotoxin Cal6.1b.